The sequence spans 270 residues: Fructose-2,6-bisphosphatase TIGAR (270 aa).

H11 acts as the Tele-phosphohistidine intermediate in catalysis. K50 carries the post-translational modification N6-acetyllysine. E89 (proton donor/acceptor) is an active-site residue.

It belongs to the phosphoglycerate mutase family. In terms of assembly, interacts with HK2; the interaction increases hexokinase HK2 activity in a hypoxia- and HIF1A-dependent manner, resulting in the regulation of mitochondrial membrane potential, thus increasing NADPH production and decreasing intracellular ROS levels.

It is found in the cytoplasm. The protein resides in the nucleus. The protein localises to the mitochondrion. The catalysed reaction is beta-D-fructose 2,6-bisphosphate + H2O = beta-D-fructose 6-phosphate + phosphate. Fructose-bisphosphatase hydrolyzing fructose-2,6-bisphosphate as well as fructose-1,6-bisphosphate. Acts as a negative regulator of glycolysis by lowering intracellular levels of fructose-2,6-bisphosphate in a p53/TP53-dependent manner, resulting in the pentose phosphate pathway (PPP) activation and NADPH production. Contributes to the generation of reduced glutathione to cause a decrease in intracellular reactive oxygen species (ROS) content, correlating with its ability to protect cells from oxidative or metabolic stress-induced cell death. Plays a role in promoting protection against cell death during hypoxia by decreasing mitochondria ROS levels in a HK2-dependent manner through a mechanism that is independent of its fructose-bisphosphatase activity. In response to cardiac damage stress, mediates p53-induced inhibition of myocyte mitophagy through ROS levels reduction and the subsequent inactivation of BNIP3. Reduced mitophagy results in an enhanced apoptotic myocyte cell death, and exacerbates cardiac damage. Plays a role in adult intestinal regeneration; contributes to the growth, proliferation and survival of intestinal crypts following tissue ablation. Plays a neuroprotective role against ischemic brain damage by enhancing PPP flux and preserving mitochondria functions. Protects glioma cells from hypoxia- and ROS-induced cell death by inhibiting glycolysis and activating mitochondrial energy metabolism and oxygen consumption in a TKTL1-dependent and p53/TP53-independent manner. Plays a role in cancer cell survival by promoting DNA repair through activating PPP flux in a CDK5-ATM-dependent signaling pathway during hypoxia and/or genome stress-induced DNA damage responses. Involved in intestinal tumor progression. This is Fructose-2,6-bisphosphatase TIGAR from Bos taurus (Bovine).